A 212-amino-acid polypeptide reads, in one-letter code: Ribonuclease HII (212 aa).

The 190-residue stretch at 20–209 (TCIVGVDEVG…VHNILYQEAS (190 aa)) folds into the RNase H type-2 domain. The a divalent metal cation site is built by Asp-26, Glu-27, and Asp-117.

It belongs to the RNase HII family. Mn(2+) serves as cofactor. Mg(2+) is required as a cofactor.

The protein localises to the cytoplasm. The catalysed reaction is Endonucleolytic cleavage to 5'-phosphomonoester.. Functionally, endonuclease that specifically degrades the RNA of RNA-DNA hybrids. The protein is Ribonuclease HII of Cereibacter sphaeroides (strain ATCC 17025 / ATH 2.4.3) (Rhodobacter sphaeroides).